The chain runs to 460 residues: Argininosuccinate lyase (460 aa).

The protein belongs to the lyase 1 family. Argininosuccinate lyase subfamily.

The protein localises to the cytoplasm. It catalyses the reaction 2-(N(omega)-L-arginino)succinate = fumarate + L-arginine. It functions in the pathway amino-acid biosynthesis; L-arginine biosynthesis; L-arginine from L-ornithine and carbamoyl phosphate: step 3/3. This chain is Argininosuccinate lyase, found in Parvibaculum lavamentivorans (strain DS-1 / DSM 13023 / NCIMB 13966).